The following is a 1488-amino-acid chain: Phenolphthiocerol/phthiocerol polyketide synthase subunit E (1488 aa).

One can recognise a Ketosynthase family 3 (KS3) domain in the interval 5 to 438 (ENAIAVVGMA…GTNAHVVLEE (434 aa)). Active-site for beta-ketoacyl synthase activity residues include Cys-184, His-320, and His-361. An acyltransferase region spans residues 551-868 (VFLFPGQGAQ…GELWSAGVEV (318 aa)). The For malonyltransferase activity role is filled by Ser-641. Residues 930–1004 (NGESQTEVTL…SLTAAVDASF (75 aa)) form the Carrier domain. Ser-965 is modified (O-(pantetheine 4'-phosphoryl)serine). 1286-1331 (EGVVAVELEGEGRSVLRPDVDLRRTVGWFTTYYPVPLACATGLGAL) contacts NADP(+).

NADP(+) serves as cofactor. Pantetheine 4'-phosphate is required as a cofactor.

The enzyme catalyses icosanoyl-[(phenol)carboxyphthiodiolenone synthase] + 2 (S)-methylmalonyl-CoA + 3 malonyl-CoA + 5 NADPH + 10 H(+) = C32-carboxyphthiodiolenone-[(phenol)carboxyphthiodiolenone synthase] + 5 CO2 + 5 NADP(+) + 5 CoA + 2 H2O. It catalyses the reaction docosanoyl-[(phenol)carboxyphthiodiolenone synthase] + 2 (S)-methylmalonyl-CoA + 3 malonyl-CoA + 5 NADPH + 10 H(+) = C34-carboxyphthiodiolenone-[(phenol)carboxyphthiodiolenone synthase] + 5 CO2 + 5 NADP(+) + 5 CoA + 2 H2O. It carries out the reaction 17-(4-hydroxyphenyl)heptadecanoyl-[(phenol)carboxyphthiodiolenone synthase] + 2 (S)-methylmalonyl-CoA + 3 malonyl-CoA + 5 NADPH + 10 H(+) = C35-(phenol)carboxyphthiodiolenone-[(phenol)carboxyphthiodiolenone synthase] + 5 CO2 + 5 NADP(+) + 5 CoA + 2 H2O. The catalysed reaction is 19-(4-hydroxyphenyl)nonadecanoyl-[(phenol)carboxyphthiodiolenone synthase] + 2 (S)-methylmalonyl-CoA + 3 malonyl-CoA + 5 NADPH + 10 H(+) = C37-(phenol)carboxyphthiodiolenone-[(phenol)carboxyphthiodiolenone synthase] + 5 CO2 + 5 NADP(+) + 5 CoA + 2 H2O. It participates in lipid metabolism; fatty acid biosynthesis. In terms of biological role, part of the PpsABCDE complex involved in the biosynthesis of the lipid core common to phthiocerols and phenolphthiocerols by successive additions of malonyl-CoA or methylmalonyl-CoA extender units. PpsA can accept as substrate the activated forms of either icosanoyl (C20), docosanoyl (C22) or lignoceroyl (C24) groups from FadD26, or a (4-hydroxyphenyl)-C17 or (4-hydroxyphenyl)-C19 fatty acyl from FadD29. PpsA initiates the biosynthesis and extends its substrate using a malonyl-CoA extender unit. The PpsB and PpsC proteins add the second and third malonyl-CoA extender units. PpsD adds an (R)-methylmalonyl unit and PpsE adds a second (R)-methylmalonyl unit. The incorporation of the methylmalonyl units results in formation of two branched methyl groups in the elongated product. This chain is Phenolphthiocerol/phthiocerol polyketide synthase subunit E (ppsE), found in Mycobacterium bovis (strain ATCC BAA-935 / AF2122/97).